The following is a 320-amino-acid chain: Ferrochelatase (320 aa).

Fe cation-binding residues include H194 and E275.

It belongs to the ferrochelatase family.

The protein localises to the cytoplasm. It catalyses the reaction heme b + 2 H(+) = protoporphyrin IX + Fe(2+). The protein operates within porphyrin-containing compound metabolism; protoheme biosynthesis; protoheme from protoporphyrin-IX: step 1/1. Its function is as follows. Catalyzes the ferrous insertion into protoporphyrin IX. This chain is Ferrochelatase, found in Vibrio parahaemolyticus serotype O3:K6 (strain RIMD 2210633).